The primary structure comprises 294 residues: Elongation factor Ts (294 aa).

Residues 79 to 82 (TDFV) are involved in Mg(2+) ion dislocation from EF-Tu.

The protein belongs to the EF-Ts family.

It is found in the cytoplasm. Associates with the EF-Tu.GDP complex and induces the exchange of GDP to GTP. It remains bound to the aminoacyl-tRNA.EF-Tu.GTP complex up to the GTP hydrolysis stage on the ribosome. The chain is Elongation factor Ts from Oceanobacillus iheyensis (strain DSM 14371 / CIP 107618 / JCM 11309 / KCTC 3954 / HTE831).